Consider the following 378-residue polypeptide: uncharacterized protein (378 aa).

Low complexity predominate over residues 150 to 176 (TTTATTSNNRFNNNNSNNNNINNNNDN). Residues 150–187 (TTTATTSNNRFNNNNSNNNNINNNNDNNNKEQKKESRC) form a disordered region. Residues 177–187 (NNKEQKKESRC) are compositionally biased toward basic and acidic residues.

This is an uncharacterized protein from Dictyostelium discoideum (Social amoeba).